A 271-amino-acid chain; its full sequence is 4-hydroxy-tetrahydrodipicolinate reductase (271 aa).

Residues 10-15, Glu36, 100-102, and 124-127 contribute to the NAD(+) site; these read GAGGRM, GTT, and SGNM. His157 (proton donor/acceptor) is an active-site residue. (S)-2,3,4,5-tetrahydrodipicolinate is bound at residue His158. Residue Lys161 is the Proton donor of the active site. 167 to 168 lines the (S)-2,3,4,5-tetrahydrodipicolinate pocket; sequence GT.

This sequence belongs to the DapB family.

It localises to the cytoplasm. The catalysed reaction is (S)-2,3,4,5-tetrahydrodipicolinate + NAD(+) + H2O = (2S,4S)-4-hydroxy-2,3,4,5-tetrahydrodipicolinate + NADH + H(+). It carries out the reaction (S)-2,3,4,5-tetrahydrodipicolinate + NADP(+) + H2O = (2S,4S)-4-hydroxy-2,3,4,5-tetrahydrodipicolinate + NADPH + H(+). The protein operates within amino-acid biosynthesis; L-lysine biosynthesis via DAP pathway; (S)-tetrahydrodipicolinate from L-aspartate: step 4/4. Its function is as follows. Catalyzes the conversion of 4-hydroxy-tetrahydrodipicolinate (HTPA) to tetrahydrodipicolinate. The sequence is that of 4-hydroxy-tetrahydrodipicolinate reductase from Rhodopseudomonas palustris (strain ATCC BAA-98 / CGA009).